A 332-amino-acid polypeptide reads, in one-letter code: Cytochrome c oxidase subunit 2 (332 aa).

The N-terminal stretch at 1-20 (MKIPGSVITLLIGVVITVVS) is a signal peptide. 2 consecutive transmembrane segments (helical) span residues 48-68 (MMTIATGLFLLVEGVLVYCLI) and 87-107 (VPLEILWTAIPTVIVFTLAVY). Residues H214, C249, C253, and H257 each contribute to the Cu cation site.

It belongs to the cytochrome c oxidase subunit 2 family. Cu cation serves as cofactor.

Its subcellular location is the cell membrane. The enzyme catalyses 4 Fe(II)-[cytochrome c] + O2 + 8 H(+)(in) = 4 Fe(III)-[cytochrome c] + 2 H2O + 4 H(+)(out). In terms of biological role, subunits I and II form the functional core of the enzyme complex. Electrons originating in cytochrome c are transferred via heme a and Cu(A) to the binuclear center formed by heme a3 and Cu(B). This is Cytochrome c oxidase subunit 2 (ctaC) from Synechocystis sp. (strain ATCC 27184 / PCC 6803 / Kazusa).